A 78-amino-acid chain; its full sequence is Sec-independent protein translocase protein TatA (78 aa).

Residues 1 to 21 form a helical membrane-spanning segment; that stretch reads MGSLSIWHWIVVIGVVLLLFG. Residues 42-60 are compositionally biased toward basic and acidic residues; that stretch reads GLQDDEKTAEKPEPVKSID. Residues 42–78 are disordered; it reads GLQDDEKTAEKPEPVKSIDHTAPPAAAPRTDVGSKVV.

Belongs to the TatA/E family. In terms of assembly, the Tat system comprises two distinct complexes: a TatABC complex, containing multiple copies of TatA, TatB and TatC subunits, and a separate TatA complex, containing only TatA subunits. Substrates initially bind to the TatABC complex, which probably triggers association of the separate TatA complex to form the active translocon.

The protein resides in the cell inner membrane. Functionally, part of the twin-arginine translocation (Tat) system that transports large folded proteins containing a characteristic twin-arginine motif in their signal peptide across membranes. TatA could form the protein-conducting channel of the Tat system. This is Sec-independent protein translocase protein TatA from Rhodopseudomonas palustris (strain BisB18).